A 108-amino-acid polypeptide reads, in one-letter code: ATP-dependent Clp protease adapter protein ClpS (108 aa).

A compositionally biased stretch (basic and acidic residues) spans 1–15; it reads MPHESSPDSQHEHGV. The tract at residues 1–22 is disordered; the sequence is MPHESSPDSQHEHGVAVEAARP.

It belongs to the ClpS family. Binds to the N-terminal domain of the chaperone ClpA.

Its function is as follows. Involved in the modulation of the specificity of the ClpAP-mediated ATP-dependent protein degradation. This is ATP-dependent Clp protease adapter protein ClpS from Stenotrophomonas maltophilia (strain K279a).